The following is a 197-amino-acid chain: ATP-dependent Clp protease proteolytic subunit (197 aa).

The active-site Nucleophile is Ser-98. The active site involves His-123.

It belongs to the peptidase S14 family. As to quaternary structure, fourteen ClpP subunits assemble into 2 heptameric rings which stack back to back to give a disk-like structure with a central cavity, resembling the structure of eukaryotic proteasomes.

The protein localises to the cytoplasm. It carries out the reaction Hydrolysis of proteins to small peptides in the presence of ATP and magnesium. alpha-casein is the usual test substrate. In the absence of ATP, only oligopeptides shorter than five residues are hydrolyzed (such as succinyl-Leu-Tyr-|-NHMec, and Leu-Tyr-Leu-|-Tyr-Trp, in which cleavage of the -Tyr-|-Leu- and -Tyr-|-Trp bonds also occurs).. Its function is as follows. Cleaves peptides in various proteins in a process that requires ATP hydrolysis. Has a chymotrypsin-like activity. Plays a major role in the degradation of misfolded proteins. This Pediococcus pentosaceus (strain ATCC 25745 / CCUG 21536 / LMG 10740 / 183-1w) protein is ATP-dependent Clp protease proteolytic subunit.